Here is a 171-residue protein sequence, read N- to C-terminus: MDYFTLFGLPARYQLDTQALSLRFQDLQRQYHPDKFASGSLAEQLAAVQQSATINQAWQTLRHPLMRAEYLLSLHGFDLASEQHTVRDTAFLMEQLELREELDEIEQAKDEARLESFIKRVKKMFDTRHQLMVEQLDNEAWDAAADTVRKLRFLDKLRSSAEQLEEKLLDF.

In terms of domain architecture, J spans 2-74; sequence DYFTLFGLPA…LMRAEYLLSL (73 aa).

The protein belongs to the HscB family. Interacts with HscA and stimulates its ATPase activity. Interacts with IscU.

In terms of biological role, co-chaperone involved in the maturation of iron-sulfur cluster-containing proteins. Seems to help targeting proteins to be folded toward HscA. The sequence is that of Co-chaperone protein HscB from Shigella flexneri serotype 5b (strain 8401).